A 118-amino-acid polypeptide reads, in one-letter code: uncharacterized protein (118 aa).

This is an uncharacterized protein from Bacillus subtilis (strain 168).